The primary structure comprises 262 residues: Ribose-5-phosphate isomerase A (262 aa).

Substrate is bound by residues 33–36, 89–92, and 102–105; these read TGST, DGAD, and KGGG. The active-site Proton acceptor is E111. K129 provides a ligand contact to substrate.

Belongs to the ribose 5-phosphate isomerase family. As to quaternary structure, homodimer.

It carries out the reaction aldehydo-D-ribose 5-phosphate = D-ribulose 5-phosphate. It participates in carbohydrate degradation; pentose phosphate pathway; D-ribose 5-phosphate from D-ribulose 5-phosphate (non-oxidative stage): step 1/1. Functionally, catalyzes the reversible conversion of ribose-5-phosphate to ribulose 5-phosphate. This Cereibacter sphaeroides (strain KD131 / KCTC 12085) (Rhodobacter sphaeroides) protein is Ribose-5-phosphate isomerase A.